Consider the following 109-residue polypeptide: MFGKGGMGNLMKQAQQMQERMQKLQEEIANMEVTGESGAGLVKVTVTGSHSVRRVNIDESLMEDDKEMLEDLIAAAFNDAARRIEETQKEKMASITGGMQLPPGMKMPF.

The interval 1–22 is disordered; it reads MFGKGGMGNLMKQAQQMQERMQ.

It belongs to the YbaB/EbfC family. As to quaternary structure, homodimer.

It localises to the cytoplasm. Its subcellular location is the nucleoid. Functionally, binds to DNA and alters its conformation. May be involved in regulation of gene expression, nucleoid organization and DNA protection. The chain is Nucleoid-associated protein VC_1055 from Vibrio cholerae serotype O1 (strain ATCC 39315 / El Tor Inaba N16961).